The sequence spans 348 residues: Small ribosomal subunit biogenesis GTPase RsgA (348 aa).

A compositionally biased stretch (basic residues) spans 1-14 (MAKRKLSKQQKWRI). The disordered stretch occupies residues 1–39 (MAKRKLSKQQKWRIQKIQDERTKRATRKETQLESQLSGG). The segment covering 16–31 (KIQDERTKRATRKETQ) has biased composition (basic and acidic residues). The CP-type G domain maps to 116–275 (FGQLKPIAAN…LIDSPGIREF (160 aa)). Residues 163-166 (NKQD) and 217-225 (GQSGVGKSS) each bind GTP. 4 residues coordinate Zn(2+): cysteine 299, cysteine 304, histidine 306, and cysteine 312.

The protein belongs to the TRAFAC class YlqF/YawG GTPase family. RsgA subfamily. Monomer. Associates with 30S ribosomal subunit, binds 16S rRNA. It depends on Zn(2+) as a cofactor.

Its subcellular location is the cytoplasm. One of several proteins that assist in the late maturation steps of the functional core of the 30S ribosomal subunit. Helps release RbfA from mature subunits. May play a role in the assembly of ribosomal proteins into the subunit. Circularly permuted GTPase that catalyzes slow GTP hydrolysis, GTPase activity is stimulated by the 30S ribosomal subunit. In Hahella chejuensis (strain KCTC 2396), this protein is Small ribosomal subunit biogenesis GTPase RsgA.